A 369-amino-acid chain; its full sequence is Putative glutamate--cysteine ligase 2-1 (369 aa).

The protein belongs to the glutamate--cysteine ligase type 2 family. YbdK subfamily.

It carries out the reaction L-cysteine + L-glutamate + ATP = gamma-L-glutamyl-L-cysteine + ADP + phosphate + H(+). Its function is as follows. ATP-dependent carboxylate-amine ligase which exhibits weak glutamate--cysteine ligase activity. The sequence is that of Putative glutamate--cysteine ligase 2-1 from Rhodococcus jostii (strain RHA1).